The following is a 73-amino-acid chain: Toxin Td3 (73 aa).

An N-terminal signal peptide occupies residues 1 to 7 (IGMVVEC). Positions 8–70 (KDGYLMGPDG…VWERATNRCG (63 aa)) constitute an LCN-type CS-alpha/beta domain. Disulfide bonds link cysteine 18–cysteine 69, cysteine 22–cysteine 44, cysteine 30–cysteine 50, and cysteine 34–cysteine 52. A Lysine amide modification is found at lysine 71.

Belongs to the long (4 C-C) scorpion toxin superfamily. Sodium channel inhibitor family. Beta subfamily. Expressed by the venom gland.

The protein resides in the secreted. Functionally, beta toxins bind voltage-independently at site-4 of sodium channels (Nav) and shift the voltage of activation toward more negative potentials thereby affecting sodium channel activation and promoting spontaneous and repetitive firing. This chain is Toxin Td3, found in Tityus discrepans (Venezuelan scorpion).